The following is a 170-amino-acid chain: Cytochrome b6-f complex subunit 4 (170 aa).

3 helical membrane-spanning segments follow: residues 46 to 66 (LLFM…GLAV), 105 to 125 (LLGI…PFIE), and 141 to 161 (TVFL…TLPL).

It belongs to the cytochrome b family. PetD subfamily. The 4 large subunits of the cytochrome b6-f complex are cytochrome b6, subunit IV (17 kDa polypeptide, PetD), cytochrome f and the Rieske protein, while the 4 small subunits are PetG, PetL, PetM and PetN. The complex functions as a dimer.

It is found in the cellular thylakoid membrane. Its function is as follows. Component of the cytochrome b6-f complex, which mediates electron transfer between photosystem II (PSII) and photosystem I (PSI), cyclic electron flow around PSI, and state transitions. The polypeptide is Cytochrome b6-f complex subunit 4 (Synechococcus sp. (strain JA-3-3Ab) (Cyanobacteria bacterium Yellowstone A-Prime)).